A 509-amino-acid polypeptide reads, in one-letter code: ATP synthase subunit alpha (509 aa).

169–176 contributes to the ATP binding site; it reads GDRQTGKT.

Belongs to the ATPase alpha/beta chains family. In terms of assembly, F-type ATPases have 2 components, CF(1) - the catalytic core - and CF(0) - the membrane proton channel. CF(1) has five subunits: alpha(3), beta(3), gamma(1), delta(1), epsilon(1). CF(0) has three main subunits: a(1), b(2) and c(9-12). The alpha and beta chains form an alternating ring which encloses part of the gamma chain. CF(1) is attached to CF(0) by a central stalk formed by the gamma and epsilon chains, while a peripheral stalk is formed by the delta and b chains.

The protein localises to the cell inner membrane. The catalysed reaction is ATP + H2O + 4 H(+)(in) = ADP + phosphate + 5 H(+)(out). Functionally, produces ATP from ADP in the presence of a proton gradient across the membrane. The alpha chain is a regulatory subunit. The sequence is that of ATP synthase subunit alpha from Brucella abortus (strain S19).